The following is a 1196-amino-acid chain: Phosphoglucan, water dikinase, chloroplastic (1196 aa).

Residues 1–54 (MESIGSHCCSSPFTFITRNSSSSLPRLVNITHRVNLSHQSHRLRNSNSRLTCTA) constitute a chloroplast transit peptide. Thr55 carries the N-acetylthreonine modification. In terms of domain architecture, CBM20 spans 66–166 (KKDGSGTKVR…NFSVVCHWDA (101 aa)). The interval 174 to 200 (PQEVGNDDDVGDGGHERDNHDVGDDRV) is disordered. Positions 185–200 (DGGHERDNHDVGDDRV) are enriched in basic and acidic residues. His759 (tele-phosphohistidine intermediate) is an active-site residue. The tract at residues 804–855 (LSTEGRSRTSKSSATKKTDKNSLSKKKTDKKSLSIDDEESKPGSSSSNSLLY) is disordered.

Belongs to the PEP-utilizing enzyme family. Homodimer. Requires Mg(2+) as cofactor. In terms of tissue distribution, in all starch containing tissues (e.g. roots, leaves, stems, inflorescence and siliques).

Its subcellular location is the plastid. It is found in the chloroplast. It catalyses the reaction [(1-&gt;4)-6-phospho-alpha-D-glucosyl](n) + n ATP + n H2O = [(1-&gt;4)-3,6-bisphospho-alpha-D-glucosyl](n) + n AMP + n phosphate + 2n H(+). Its function is as follows. Mediates the incorporation of phosphate into starch-like phospho-alpha-glucan, mostly at the C-3 position of glucose units. Required for starch degradation, suggesting that the phosphate content of starch regulates its degradability. The protein is Phosphoglucan, water dikinase, chloroplastic (GWD3) of Arabidopsis thaliana (Mouse-ear cress).